The sequence spans 202 residues: D-alanyl-D-alanine dipeptidase (202 aa).

Zn(2+) contacts are provided by histidine 116 and aspartate 123. Catalysis depends on glutamate 181, which acts as the Proton donor/acceptor. Histidine 184 contributes to the Zn(2+) binding site.

Belongs to the peptidase M15D family. As to quaternary structure, homodimer. Zn(2+) is required as a cofactor. Requires Fe(2+) as cofactor. Co(2+) serves as cofactor. The cofactor is Ni(2+).

The enzyme catalyses D-alanyl-D-alanine + H2O = 2 D-alanine. With respect to regulation, inhibited by aminoalkyl phosphinate analogs. Its function is as follows. Catalyzes hydrolysis of the D-alanyl-D-alanine dipeptide. This is D-alanyl-D-alanine dipeptidase (vanX) from Enterococcus faecium (Streptococcus faecium).